The sequence spans 86 residues: Weak neurotoxin WNTX34 (86 aa).

The first 21 residues, 1–21 (MKTLLLTLVVVTIVCLDLGYS), serve as a signal peptide directing secretion. Disulfide bonds link C24–C45, C27–C32, C38–C63, C67–C78, and C79–C84.

Belongs to the three-finger toxin family. Ancestral subfamily. Orphan group II sub-subfamily. In terms of tissue distribution, expressed by the venom gland.

It is found in the secreted. Functionally, binds with low affinity to muscular (alpha-1-beta-1-delta-epsilon/CHRNA1-CHRNB1-CHRND-CHRNE) and very low affinity to neuronal (alpha-7/CHRNA7) nicotinic acetylcholine receptor (nAChR). The sequence is that of Weak neurotoxin WNTX34 from Ophiophagus hannah (King cobra).